A 503-amino-acid chain; its full sequence is Transcription termination/antitermination protein NusA (503 aa).

The S1 motif domain maps to 140-206; that stretch reads GELVIGVVKR…RGPQLLVSRT (67 aa). The KH domain occupies 308-374; it reads SHTMDIAVNK…FMEKLDVDEE (67 aa).

The protein belongs to the NusA family. As to quaternary structure, monomer. Binds directly to the core enzyme of the DNA-dependent RNA polymerase and to nascent RNA.

The protein localises to the cytoplasm. Functionally, participates in both transcription termination and antitermination. This chain is Transcription termination/antitermination protein NusA, found in Coxiella burnetii (strain RSA 493 / Nine Mile phase I).